Reading from the N-terminus, the 254-residue chain is MNTEVIAIIPARFASSRFPGKPLADMLGKSMIQRVHERIVGVVPRAVVATDDERIRQAVEDFGGEVVMTSPECSSGTERCREAFDKVGRGEKIVLNLQGDEPFIQKEQIDLLISAFDKPETDIATLAEVFSSDVSFERLNNPNSPKIVLDHGGYALYFSRSVIPYLRGVQPDSWCRRHTYYKHIGIYAFRPTVLRKITSLPQSTAEQAESLEQLRWLEYGYRIRVLQTQQSTIGIDTPEDMEKAIAYLRSQGME.

The protein belongs to the KdsB family.

The protein resides in the cytoplasm. It carries out the reaction 3-deoxy-alpha-D-manno-oct-2-ulosonate + CTP = CMP-3-deoxy-beta-D-manno-octulosonate + diphosphate. It functions in the pathway nucleotide-sugar biosynthesis; CMP-3-deoxy-D-manno-octulosonate biosynthesis; CMP-3-deoxy-D-manno-octulosonate from 3-deoxy-D-manno-octulosonate and CTP: step 1/1. It participates in bacterial outer membrane biogenesis; lipopolysaccharide biosynthesis. Activates KDO (a required 8-carbon sugar) for incorporation into bacterial lipopolysaccharide in Gram-negative bacteria. This is 3-deoxy-manno-octulosonate cytidylyltransferase from Porphyromonas gingivalis (strain ATCC BAA-308 / W83).